The primary structure comprises 511 residues: Putative thymidine phosphorylase 1 (511 aa).

The protein belongs to the thymidine/pyrimidine-nucleoside phosphorylase family. Type 2 subfamily.

The enzyme catalyses thymidine + phosphate = 2-deoxy-alpha-D-ribose 1-phosphate + thymine. The chain is Putative thymidine phosphorylase 1 from Acidovorax sp. (strain JS42).